A 196-amino-acid chain; its full sequence is MKTIEIIGYRRANLGKQASKQLRNDAQVPGVLYGGKEQVHFYTPMAILKDLVYTPQAYFVTLNLEGAIYNCILQDIQFHPVNEVILHIDLLQIFEDKQIKMDIPIVLVGDAPGVVKGGNLVHKKKKLSVVAYPKDMPDTIPVDISGLDVGQMTRVSHIKAENYTILAVPGTPVAVVETTRALRAGAAEAEGKGKKK.

It belongs to the bacterial ribosomal protein bL25 family. CTC subfamily. Part of the 50S ribosomal subunit; part of the 5S rRNA/L5/L18/L25 subcomplex. Contacts the 5S rRNA. Binds to the 5S rRNA independently of L5 and L18.

Its function is as follows. This is one of the proteins that binds to the 5S RNA in the ribosome where it forms part of the central protuberance. This Amoebophilus asiaticus (strain 5a2) protein is Large ribosomal subunit protein bL25.